Here is a 361-residue protein sequence, read N- to C-terminus: Nuclear pore complex protein NUP43 (361 aa).

The interval 51-73 (IQSLDPNPRGNHNTNPLIESLSS) is disordered. 3 WD repeats span residues 132–173 (FHVG…YRKV), 177–215 (NGLVAYRAVKWASPTEFVTGGYGFGLQLWDQRKSGEAVS), and 225–265 (KTSA…QPIV).

Part of the nuclear pore complex (NPC). The NPC has an eight-fold symmetrical structure comprising a central transport channel and two rings, the cytoplasmic and nuclear rings, to which eight filaments are attached. The cytoplasmic filaments have loose ends, while the nuclear filaments are joined in a distal ring, forming a nuclear basket. NPCs are highly dynamic in configuration and composition, and can be devided in 3 subcomplexes, the NUP62 subcomplex, the NUP107-160 subcomplex and the NUP93 subcomplex, containing approximately 30 different nucleoporin proteins.

It localises to the nucleus envelope. Its subcellular location is the nucleus. The protein resides in the nuclear pore complex. In Arabidopsis thaliana (Mouse-ear cress), this protein is Nuclear pore complex protein NUP43.